Reading from the N-terminus, the 794-residue chain is Inactive zinc metalloprotease C354.09c (794 aa).

The disordered stretch occupies residues 1–56; it reads MTDEKHVYVPPPKDPPSYEEVALHSALNNSAPPNDGEQNETSMEEMEIIEPPSEDS. Residues 91–111 form a helical membrane-spanning segment; the sequence is IPFQFLYLAVIATVIILASYY.

Belongs to the peptidase M28 family. M28B subfamily.

Its subcellular location is the membrane. The chain is Inactive zinc metalloprotease C354.09c from Schizosaccharomyces pombe (strain 972 / ATCC 24843) (Fission yeast).